Consider the following 67-residue polypeptide: Large ribosomal subunit protein uL29c (67 aa).

The protein belongs to the universal ribosomal protein uL29 family.

The protein resides in the plastid. It is found in the chloroplast. In Porphyra purpurea (Red seaweed), this protein is Large ribosomal subunit protein uL29c (rpl29).